The chain runs to 463 residues: L-seryl-tRNA(Sec) selenium transferase (463 aa).

Lysine 295 bears the N6-(pyridoxal phosphate)lysine mark.

This sequence belongs to the SelA family. As to quaternary structure, homodecamer; pentamer of dimers. Binds only one seryl-tRNA(Sec) per dimer. The cofactor is pyridoxal 5'-phosphate.

The protein resides in the cytoplasm. It carries out the reaction L-seryl-tRNA(Sec) + selenophosphate + H(+) = L-selenocysteinyl-tRNA(Sec) + phosphate. Its pathway is aminoacyl-tRNA biosynthesis; selenocysteinyl-tRNA(Sec) biosynthesis; selenocysteinyl-tRNA(Sec) from L-seryl-tRNA(Sec) (bacterial route): step 1/1. In terms of biological role, converts seryl-tRNA(Sec) to selenocysteinyl-tRNA(Sec) required for selenoprotein biosynthesis. In Escherichia coli (strain 55989 / EAEC), this protein is L-seryl-tRNA(Sec) selenium transferase.